The sequence spans 57 residues: Small ribosomal subunit protein bS21 (57 aa).

The protein belongs to the bacterial ribosomal protein bS21 family.

The polypeptide is Small ribosomal subunit protein bS21 (Geobacillus kaustophilus (strain HTA426)).